Reading from the N-terminus, the 314-residue chain is PDZ domain-containing protein GIPC2 (314 aa).

Over residues 1–12 (MPLGLRGKKKAA) the composition is skewed to basic residues. Positions 1 to 36 (MPLGLRGKKKAAKSKETARLVEGERSGGSQGVPGPP) are disordered. Residues 13-25 (KSKETARLVEGER) show a composition bias toward basic and acidic residues. The region spanning 117–197 (EVNVYKSEDS…EELFTLQLIE (81 aa)) is the PDZ domain.

It belongs to the GIPC family. Probably interacts with SEMA5A.

It is found in the cytoplasm. The protein is PDZ domain-containing protein GIPC2 (Gipc2) of Rattus norvegicus (Rat).